A 395-amino-acid polypeptide reads, in one-letter code: Demethylmacrocin O-methyltransferase (395 aa).

It carries out the reaction demethylmacrocin + S-adenosyl-L-methionine = macrocin + S-adenosyl-L-homocysteine + H(+). It participates in antibiotic biosynthesis; tylosin biosynthesis. O-methyltransferase that catalyzes the conversion of demethylmacrocin to macrocin, the penultimate step of tylosin antibiotic biosynthesis. Also able to mediate the conversion of demethyllactenocin to lactenocin. This is Demethylmacrocin O-methyltransferase (tylE) from Streptomyces fradiae (Streptomyces roseoflavus).